The following is a 320-amino-acid chain: Protein HEXIM1 (320 aa).

Positions 1-124 are disordered; that stretch reads MAEPLLSEFQ…RRRPSKKKRL (124 aa). A compositionally biased stretch (polar residues) spans 9-19; it reads FQHQPQTSNCT. Positions 24–47 are enriched in basic and acidic residues; sequence VHEERNPDRPPGAEERVPEEDSRW. A Phosphoserine modification is found at serine 98. Basic residues predominate over residues 109-124; it reads VGKKKHRRRPSKKKRL. The segment at 111-138 is basic region; mediates nuclear localization and interaction with 7SK snRNA and NR3C1; that stretch reads KKKHRRRPSKKKRLWKPYYTLTWEEKKK. The interaction with P-TEFb stretch occupies residues 163 to 166; sequence PYNT. The interval 171–211 is autoinhibitory acidic region; in absence of 7SK snRNA interacts with the basic region preventing interaction with P-TEFb and modulating subcellular localization; it reads MDDHDQEEPDLKTGLYPKRAAAKSDDTSDEDFMEEAGEEDG. The segment at 174 to 223 is disordered; it reads HDQEEPDLKTGLYPKRAAAKSDDTSDEDFMEEAGEEDGGSDGMGGDGSEF. Serine 194 is subject to Phosphoserine. Threonine 197 bears the Phosphothreonine mark. Acidic residues predominate over residues 197 to 212; the sequence is TSDEDFMEEAGEEDGG. Serine 198, serine 213, and serine 221 each carry phosphoserine. A coiled-coil region spans residues 244 to 310; the sequence is SKQELIKEYL…LTENELHRQQ (67 aa). The tract at residues 247–275 is mediates interaction with CCNT1; sequence ELIKEYLELEKCLSRMEDENNRLRLESQR. Positions 271 to 316 are required for inhibition of ESR1-dependent transcription; it reads LESQRLDGDDARVRELELELDRLRAENLQLLTENELHRQQERAPLS.

This sequence belongs to the HEXIM family. In terms of assembly, homooligomer and heterooligomer with HEXIM2; probably dimeric. Core component of the 7SK RNP complex, at least composed of 7SK RNA, LARP7, MEPCE, HEXIM1 (or HEXIM2) and P-TEFb (composed of CDK9 and CCNT1/cyclin-T1). Interacts with the N-CoR complex through NCOR1. Interacts with ESR1 and NR3C1. May interact with NF-kappa-B through RELA. Interacts with CCNT2; mediates formation of a tripartite complex with KPNA2. Part of the HDP-RNP complex composed of at least HEXIM1, PRKDC, XRCC5, XRCC6, paraspeckle proteins (SFPQ, NONO, PSPC1, RBM14, and MATR3) and NEAT1 non-coding RNA.

It is found in the nucleus. The protein localises to the cytoplasm. In terms of biological role, transcriptional regulator which functions as a general RNA polymerase II transcription inhibitor. Core component of the 7SK RNP complex: in cooperation with 7SK snRNA sequesters P-TEFb in a large inactive 7SK snRNP complex preventing RNA polymerase II phosphorylation and subsequent transcriptional elongation. May also regulate NF-kappa-B, ESR1, NR3C1 and CIITA-dependent transcriptional activity. Plays a role in the regulation of DNA virus-mediated innate immune response by assembling into the HDP-RNP complex, a complex that serves as a platform for IRF3 phosphorylation and subsequent innate immune response activation through the cGAS-STING pathway. This is Protein HEXIM1 (HEXIM1) from Bos taurus (Bovine).